The primary structure comprises 292 residues: MKNYSQYHQDIMNQKLENIRNNIQCSFEFFPPKNSFLEENLWSTVNRLSLLKPKFFSVTYGANTGEREKTYDTVQKIYKKTGIITAAHLTCIDSTPHKLKEIAYNYWNSGIKSIVALRGDTLEKDYRHTMYAVDLVLLLKKIADFDISVAAYPELHPESKNVKSDILNLKKKVDAGASRAITQFFFNIESYLRFRDNCIKNKINIDIIPGILPVCNFQKLKRFSSMTNVKIPKWMLDMFNGLDDDIFTQKIIGSSIAIDMVKKLSCEGVKNFHFYTLNQSDITYSICHILGL.

E28 (proton donor/acceptor) is an active-site residue. NADH is bound at residue T59. The FAD site is built by Y60, A62, H88, R118, G119, D120, A132, Y152, H156, D165, N168, K171, and K172. D120 contacts (6S)-5-methyl-5,6,7,8-tetrahydrofolate. Residue Q183 participates in NADH binding. Q183 is a (6S)-5-methyl-5,6,7,8-tetrahydrofolate binding site.

The protein belongs to the methylenetetrahydrofolate reductase family. Requires FAD as cofactor.

It catalyses the reaction (6S)-5-methyl-5,6,7,8-tetrahydrofolate + NAD(+) = (6R)-5,10-methylene-5,6,7,8-tetrahydrofolate + NADH + H(+). The protein operates within one-carbon metabolism; tetrahydrofolate interconversion. Its pathway is amino-acid biosynthesis; L-methionine biosynthesis via de novo pathway. Functionally, catalyzes the NADH-dependent reduction of 5,10-methylenetetrahydrofolate to 5-methyltetrahydrofolate. Is required to provide the methyl group necessary for methionine synthetase to convert homocysteine to methionine; the methyl group is given by 5-methyltetrahydrofolate. The chain is 5,10-methylenetetrahydrofolate reductase (metF) from Buchnera aphidicola subsp. Acyrthosiphon pisum (strain APS) (Acyrthosiphon pisum symbiotic bacterium).